Reading from the N-terminus, the 672-residue chain is Hydrogenase-4 component B (672 aa).

The Periplasmic portion of the chain corresponds to Met1–Gln5. Residues Leu6 to Gly26 form a helical membrane-spanning segment. Topologically, residues Leu27–Leu30 are cytoplasmic. A helical membrane pass occupies residues Ala31–Ile51. Topologically, residues Thr52–Ser79 are periplasmic. The chain crosses the membrane as a helical span at residues Leu80–Leu100. The Cytoplasmic segment spans residues Thr101–Asn119. A helical membrane pass occupies residues Ile120 to Leu140. Topologically, residues Phe141–Gly164 are periplasmic. Residues Met165 to Met185 form a helical membrane-spanning segment. At Gly186–Thr199 the chain is on the cytoplasmic side. The helical transmembrane segment at Leu200–Ala220 threads the bilayer. Over Lys221 to Ala242 the chain is Periplasmic. A helical transmembrane segment spans residues Ser243–Met263. The Cytoplasmic segment spans residues Asp264–Pro272. Residues Leu273–Tyr293 traverse the membrane as a helical segment. Residues Ala294–Asn311 lie on the Periplasmic side of the membrane. Residues Val312–Leu332 form a helical membrane-spanning segment. At Leu333 to Leu342 the chain is on the cytoplasmic side. A helical membrane pass occupies residues Phe343–Ile363. Residues Ser364–Thr384 are Periplasmic-facing. The helical transmembrane segment at Ala385–Ile405 threads the bilayer. Over Ser406 to Leu427 the chain is Cytoplasmic. Residues Ala428–Val448 traverse the membrane as a helical segment. Residues Lys449–Met474 are Periplasmic-facing. Residues Ile475 to Leu495 traverse the membrane as a helical segment. The Cytoplasmic segment spans residues Ala496–His504. Residues Ala505–Phe525 form a helical membrane-spanning segment. The Periplasmic segment spans residues His526–Pro531. The helical transmembrane segment at Ser532–Cys552 threads the bilayer. The Cytoplasmic portion of the chain corresponds to Arg553–Asp651. The helical transmembrane segment at Phe652–Val672 threads the bilayer.

It belongs to the complex I subunit 5 family.

Its subcellular location is the cell inner membrane. Its function is as follows. Possible component of hydrogenase 4. In Escherichia coli (strain K12), this protein is Hydrogenase-4 component B.